A 282-amino-acid polypeptide reads, in one-letter code: Parvulin-like PPIase (282 aa).

The signal sequence occupies residues 1-20 (MKKLSVIFLSVSMLSSIAFG). One can recognise a PpiC domain in the interval 138-231 (KEQIKVAHIL…FGWHIIKVLE (94 aa)).

The protein belongs to the PpiC/parvulin rotamase family.

The protein resides in the cell outer membrane. The enzyme catalyses [protein]-peptidylproline (omega=180) = [protein]-peptidylproline (omega=0). The protein is Parvulin-like PPIase (plp) of Rickettsia prowazekii (strain Madrid E).